The primary structure comprises 257 residues: Nickel import system ATP-binding protein NikD (257 aa).

The ABC transporter domain occupies 4-245 (IDIQNLTIKN…HLHPYTEQLI (242 aa)). 37-44 (GESGAGKS) lines the ATP pocket.

It belongs to the ABC transporter superfamily. In terms of assembly, the complex is composed of two ATP-binding proteins (NikD and NikE), two transmembrane proteins (NikB and NikC) and a solute-binding protein (NikA).

It is found in the cell membrane. It catalyses the reaction Ni(2+)(out) + ATP + H2O = Ni(2+)(in) + ADP + phosphate + H(+). Functionally, part of the ABC transporter complex NikABCDE (Opp2) involved in nickel import. Probably responsible for energy coupling to the transport system. The polypeptide is Nickel import system ATP-binding protein NikD (Staphylococcus aureus (strain bovine RF122 / ET3-1)).